The following is a 778-amino-acid chain: Melanoma-associated antigen D1 (778 aa).

3 disordered regions span residues 41–60, 78–123, and 182–333; these read PTNQATAAASPQSSQPPTAN, FKVQ…KGPN, and KAWN…PAWQ. Tyr92 is modified (phosphotyrosine). Composition is skewed to polar residues over residues 104 to 118, 185 to 211, 225 to 240, 253 to 263, and 300 to 319; these read PNTQPKAAFKSQNAT, NDTTKAPTADTQTQNVNQAKMATSQAD, TAQTSADGSQAQNLES, NNLNVEENSSG, and LAWQNPSGWQNQTARQTPPA. Repeat copies occupy residues 296 to 301, 302 to 307, 308 to 313, 332 to 337, 338 to 343, 344 to 349, 350 to 355, 356 to 361, 362 to 367, 368 to 373, 374 to 379, 380 to 385, 386 to 391, 392 to 397, 398 to 403, 404 to 409, 410 to 415, 416 to 421, and 422 to 427. The tract at residues 296-444 is 22 X 6 AA tandem repeats of W-[PQ]-X-P-X-X; that stretch reads WQTPLAWQNP…IPPDWQNLRP (149 aa). The segment at 376 to 412 is disordered; that stretch reads NPPGWQTPPGWQTPPGWQGPPDWQGPPDWPLPPDWPL. Over residues 377–397 the composition is skewed to low complexity; it reads PPGWQTPPGWQTPPGWQGPPD. The span at 398-412 shows a compositional bias: pro residues; sequence WQGPPDWPLPPDWPL. The stretch at 428-432 is one 20; approximate repeat; it reads WIPAD. Repeat copies occupy residues 433 to 438 and 439 to 444. The span at 440 to 455 shows a compositional bias: low complexity; the sequence is QNLRPSPNLRPSPNSR. The disordered stretch occupies residues 440–466; that stretch reads QNLRPSPNLRPSPNSRASQNPGAAQPR. An MAGE domain is found at 471–669; that stretch reads LQERANKLVK…RDWTAQFMEA (199 aa).

As to quaternary structure, interacts with DLX5, DLX7 and MSX2 and forms homomultimers. Interacts with UNC5A. Interacts with TRIM28 and PJA1. Interacts with NGFR/p75NTR and RORA. As to expression, expressed in bone marrow stromal cells from both multiple myeloma patients and healthy donors. Seems to be ubiquitously expressed.

It is found in the cytoplasm. The protein resides in the cell membrane. Its subcellular location is the nucleus. In terms of biological role, involved in the apoptotic response after nerve growth factor (NGF) binding in neuronal cells. Inhibits cell cycle progression, and facilitates NGFR-mediated apoptosis. May act as a regulator of the function of DLX family members. May enhance ubiquitin ligase activity of RING-type zinc finger-containing E3 ubiquitin-protein ligases. Proposed to act through recruitment and/or stabilization of the Ubl-conjugating enzyme (E2) at the E3:substrate complex. Plays a role in the circadian rhythm regulation. May act as RORA co-regulator, modulating the expression of core clock genes such as BMAL1 and NFIL3, induced, or NR1D1, repressed. The sequence is that of Melanoma-associated antigen D1 (MAGED1) from Homo sapiens (Human).